The primary structure comprises 300 residues: Porphobilinogen deaminase (300 aa).

S-(dipyrrolylmethanemethyl)cysteine is present on cysteine 239.

Belongs to the HMBS family. Monomer. Dipyrromethane is required as a cofactor.

The catalysed reaction is 4 porphobilinogen + H2O = hydroxymethylbilane + 4 NH4(+). The protein operates within porphyrin-containing compound metabolism; protoporphyrin-IX biosynthesis; coproporphyrinogen-III from 5-aminolevulinate: step 2/4. In terms of biological role, tetrapolymerization of the monopyrrole PBG into the hydroxymethylbilane pre-uroporphyrinogen in several discrete steps. This Francisella tularensis subsp. holarctica (strain FTNF002-00 / FTA) protein is Porphobilinogen deaminase.